We begin with the raw amino-acid sequence, 2210 residues long: RNA-directed RNA polymerase L (2210 aa).

The segment at Lys-26–Ser-285 is endonuclease. 3 residues coordinate Mn(2+): Glu-51, Asp-88, and Glu-101. Residue Lys-114 is part of the active site. The region spanning Leu-1163–Val-1359 is the RdRp catalytic domain. Position 1319 (Asp-1319) interacts with Mg(2+).

The protein belongs to the Bunyavirales RNA polymerase family. In terms of assembly, homomultimer; the oligomeric structure is essential for the polymerase activity. Interacts with nucleoprotein N. Interacts with protein Z; this interaction inhibits viral transcription and replication, Z partially blocks the product exit tunnel for the releasing nascent RNA product. Requires Mn(2+) as cofactor. The cofactor is Mg(2+).

It is found in the virion. The protein localises to the host cytoplasm. It catalyses the reaction RNA(n) + a ribonucleoside 5'-triphosphate = RNA(n+1) + diphosphate. RNA-dependent RNA polymerase, which is responsible for the replication and transcription of the viral RNA genome using antigenomic RNA as an intermediate. During transcription, synthesizes subgenomic RNAs and assures their capping by a cap-snatching mechanism, which involves the endonuclease activity cleaving the host capped pre-mRNAs. These short capped RNAs are then used as primers for viral transcription. The 3'-end of subgenomic mRNAs molecules are heterogeneous and not polyadenylated. The replicase function is to direct synthesis of antigenomic and genomic RNA which are encapsidated and non capped. As a consequence of the use of the same enzyme for both transcription and replication, these mechanisms need to be well coordinated. These processes may be regulated by proteins N and Z in a dose-dependent manner. Z protein inhibits the viral polymerase L und thus the viral transcription and RNA synthesis. In Sigmodon alstoni (PIRV), this protein is RNA-directed RNA polymerase L.